Reading from the N-terminus, the 629-residue chain is Ionotropic receptor 75a (629 aa).

Residues 1–335 are Extracellular-facing; it reads MQLVQLANFV…GDVFLQPFSP (335 aa). N-linked (GlcNAc...) asparagine glycosylation is found at Asn-61, Asn-112, Asn-126, Asn-144, Asn-166, and Asn-232. The helical transmembrane segment at 336–356 threads the bilayer; that stretch reads LVWYLFGGVLSLIGVLLWITF. The Cytoplasmic portion of the chain corresponds to 357–374; it reads YMECKRMQKRWRLDYLPS. Residues 375 to 395 form a helical membrane-spanning segment; that stretch reads LLSTFLISFGAACIQSSSLIP. The Extracellular segment spans residues 396-402; the sequence is RSAGGRL. The chain crosses the membrane as a helical span at residues 403–423; it reads IYFALFLISFIMYNYYTSVVV. The Cytoplasmic segment spans residues 424–592; sequence SSLLSSPVKS…NFVITVGMEY (169 aa). A helical transmembrane segment spans residues 593 to 613; the sequence is VAPLLLMLICADILVVVILLV. Residues 614–629 lie on the Extracellular side of the membrane; the sequence is ELAWKRFFTRPLTIHP.

It belongs to the glutamate-gated ion channel (TC 1.A.10.1) family. Expressed in neurons in the antennal coeloconic 2 (ac2) sensillum class of sensory hairs (at protein level).

Its subcellular location is the cell membrane. It localises to the cell projection. It is found in the dendrite. In terms of biological role, olfactory receptor for propionic, butyric and 2-oxopentanoic acids. This is Ionotropic receptor 75a from Drosophila sechellia (Fruit fly).